Consider the following 225-residue polypeptide: MLGLDACELGEQLLELLRLALCARVLLADKDGESTPSDEVLDEIVPEYQAPGKKSMLAIWQLDPGDVSLVKYKQALLGPLPPIMDPSLPNVQVTRLTLLTEQAPGPIIMDLTGDLDALKNQVFVLKEGIEYKVKITFKVNKEIVSGLKCLHHTYRRGLRVDKAIFMVGSYGPRAQEYEFVTSVEEAPRGALARGLYVVRSLFTDDDRLNHLSWEWHLHVCQDWKD.

Belongs to the Rho GDI family. Detected only in brain, lung, kidney and testis.

The protein resides in the cytoplasm. Inhibits GDP/GTP exchange reaction of RhoB. Interacts specifically with the GDP- and GTP-bound forms of post-translationally processed Rhob and Rhog proteins, both of which show a growth-regulated expression in mammalian cells. Stimulates the release of the GDP-bound but not the GTP-bound RhoB protein. Also inhibits the GDP/GTP exchange of RhoB but shows less ability to inhibit the dissociation of prebound GTP. The sequence is that of Rho GDP-dissociation inhibitor 3 (Arhgdig) from Mus musculus (Mouse).